Here is a 207-residue protein sequence, read N- to C-terminus: Outer-membrane lipoprotein LolB (207 aa).

Positions 1-21 (MPLPDFRFIRLLPLAALVLTA) are cleaved as a signal peptide. A lipid anchor (N-palmitoyl cysteine) is attached at Cys-22. A lipid anchor (S-diacylglycerol cysteine) is attached at Cys-22.

This sequence belongs to the LolB family. In terms of assembly, monomer.

It localises to the cell outer membrane. Plays a critical role in the incorporation of lipoproteins in the outer membrane after they are released by the LolA protein. This is Outer-membrane lipoprotein LolB from Escherichia coli O6:H1 (strain CFT073 / ATCC 700928 / UPEC).